Reading from the N-terminus, the 210-residue chain is uncharacterized protein (210 aa).

This is an uncharacterized protein from Aquifex aeolicus (strain VF5).